The chain runs to 288 residues: THO complex subunit 4D (288 aa).

Positions 1-55 (MSGALNMTLDEIVKRGKTARSGGRGISRGRGRGRGGGGRGAGPARRGPLAVNARP) are disordered. Residue serine 2 is modified to N-acetylserine. In terms of domain architecture, RRM spans 93–170 (TRLHVTNLDQ…RPMRLEILGG (78 aa)). The interval 201–288 (QGGGGRGRVR…SYHADAMNTS (88 aa)) is disordered. Over residues 232-260 (QGGGMRGGRGGFRARGRGNGGRGRGGGRG) the composition is skewed to gly residues. Basic and acidic residues predominate over residues 264–281 (KPVEKSAADLDKDLESYH).

This sequence belongs to the ALYREF family. In terms of assembly, interacts with PARP1. Interacts with EIF4A3.

Its subcellular location is the nucleus. The protein resides in the nucleoplasm. It is found in the nucleolus. Export adapter involved in nuclear export of spliced and unspliced mRNA. Plays a role in disease resistance. Mediates multiple defense responses triggered by NEP1, including stomatal closure, hypersensitive cell death (HCD) and defense-related gene expression. This is THO complex subunit 4D from Arabidopsis thaliana (Mouse-ear cress).